The sequence spans 279 residues: Proteasome subunit beta (279 aa).

Positions 1–51 are cleaved as a propeptide — removed in mature form; by autocatalysis; sequence MTFDASGRLPEAFLTPGGSSFMDFLAGHAPDLLPGRRSLGTGDLSKDVPHG. The Nucleophile role is filled by threonine 52.

This sequence belongs to the peptidase T1B family. The 20S proteasome core is composed of 14 alpha and 14 beta subunits that assemble into four stacked heptameric rings, resulting in a barrel-shaped structure. The two inner rings, each composed of seven catalytic beta subunits, are sandwiched by two outer rings, each composed of seven alpha subunits. The catalytic chamber with the active sites is on the inside of the barrel. Has a gated structure, the ends of the cylinder being occluded by the N-termini of the alpha-subunits. Is capped by the proteasome-associated ATPase, ARC.

The protein localises to the cytoplasm. It carries out the reaction Cleavage of peptide bonds with very broad specificity.. It functions in the pathway protein degradation; proteasomal Pup-dependent pathway. With respect to regulation, the formation of the proteasomal ATPase ARC-20S proteasome complex, likely via the docking of the C-termini of ARC into the intersubunit pockets in the alpha-rings, may trigger opening of the gate for substrate entry. Interconversion between the open-gate and close-gate conformations leads to a dynamic regulation of the 20S proteasome proteolysis activity. Functionally, component of the proteasome core, a large protease complex with broad specificity involved in protein degradation. The sequence is that of Proteasome subunit beta from Kribbella flavida (strain DSM 17836 / JCM 10339 / NBRC 14399).